The following is a 202-amino-acid chain: Casparian strip membrane protein 4 (202 aa).

Topologically, residues 1-40 (MKSDSIAVDVPAESSSAIKGKAPLLGLARDHTGSGGYKRG) are cytoplasmic. Residues 41–61 (LSIFDFLLRLAAIVAALAAAA) form a helical membrane-spanning segment. Topologically, residues 62–90 (TMGTSDETLPFFTQFLQFEASYDDLPTFQ) are extracellular. The chain crosses the membrane as a helical span at residues 91–111 (FFVVAIAIVTGYLVLSLPFSV). Residues 112–130 (VTIVRPLAVAPRLLLLVLD) are Cytoplasmic-facing. Residues 131–151 (TAALALDTAAASAAAAIVYLA) form a helical membrane-spanning segment. Topologically, residues 152 to 176 (HNGNTNTNWLPICQQFGDFCQKTSG) are extracellular. The helical transmembrane segment at 177–197 (AVVSAFASVTFLAILVVISGV) threads the bilayer. Over 198–202 (SLKRP) the chain is Cytoplasmic.

Belongs to the Casparian strip membrane proteins (CASP) family. As to quaternary structure, homodimer and heterodimers.

The protein resides in the cell membrane. In terms of biological role, regulates membrane-cell wall junctions and localized cell wall deposition. Required for establishment of the Casparian strip membrane domain (CSD) and the subsequent formation of Casparian strips, a cell wall modification of the root endodermis that determines an apoplastic barrier between the intraorganismal apoplasm and the extraorganismal apoplasm and prevents lateral diffusion. The sequence is that of Casparian strip membrane protein 4 from Arabidopsis lyrata subsp. lyrata (Lyre-leaved rock-cress).